A 348-amino-acid polypeptide reads, in one-letter code: N-(sulfonatooxy)prop-2-enimidothioate sulfolyase (348 aa).

7 Kelch repeats span residues 1–33 (MARTLQGEWMKVEQKGGQVPAPRSSHGIAVIGD), 34–85 (KLYC…VAVG), 87–133 (KLYV…FHSM), 139–194 (HVYV…VVQG), 209–254 (KIPT…FAHA), 259–314 (YIII…ASTT), and 322–348 (GLLVHGGKLMTNERTDEMYFFAVNSST). 5 residues coordinate a (Z)-N-(sulfonatooxy)alkanimidothioate: glutamate 46, arginine 94, threonine 129, phenylalanine 130, and arginine 157. Arginine 94 acts as the Proton donor in catalysis. The active-site Proton donor is the arginine 157. The active-site Proton acceptor is the glutamate 220. Residue glutamate 266 coordinates Fe(2+). Position 269 (arginine 269) interacts with a (Z)-N-(sulfonatooxy)alkanimidothioate. Residues aspartate 270 and histidine 274 each coordinate Fe(2+). Residues tryptophan 309 and valine 310 each coordinate a (Z)-N-(sulfonatooxy)alkanimidothioate.

As to quaternary structure, homodimer. The cofactor is Fe(2+). In terms of tissue distribution, expressed constitutively in roots, stems, leaves, flowers, siliques and seedlings.

It carries out the reaction (Z)-N-(sulfonatooxy)prop-2-enimidothioate = allyl thiocyanate + sulfate. It catalyses the reaction (Z)-N-(sulfonatooxy)prop-2-enimidothioate = 2-(thiiran-2-yl)acetonitrile + sulfate. The catalysed reaction is (Z)-N-(sulfonatooxy)prop-2-enimidothioate = allyl isothiocyanate + sulfate. The enzyme catalyses (Z)-phenyl-N-(sulfonatooxy)methanimidothioate = phenylacetonitrile + sulfur + sulfate. It carries out the reaction glucoerucin + H2O = (Z)-4-methylsulfanylbutyl-N-(sulfonatooxy)methanimidothioate + D-glucose. It catalyses the reaction (Z)-4-methylsulfanylbutyl-N-(sulfonatooxy)methanimidothioate = 5-(methylsulfanyl)pentanenitrile + sulfur + sulfate + H(+). With respect to regulation, stimulated by the presence of Fe(2+) leading to an increase formation of both thiocyanate and epithionitrile with allylglucosinolate as substrate in the presence of myrosinase. Repressed by EDTA. In terms of biological role, specifier protein that contributes to constitutive and herbivore-induced simple nitrile formation. Catalyzes allylthiocyanate and corresponding epithionitrile formation from allylglucosinolate in the presence of myrosinase. Also converts aliphatic glucosinolates, such as indol-3-ylmethylglucosinolate, 4-methylsulfinylbutylglucosinolate, 4-methylthiobutyl- and benzylisothiocyanate, to simple nitriles. The chain is N-(sulfonatooxy)prop-2-enimidothioate sulfolyase from Thlaspi arvense (Field penny-cress).